Here is a 71-residue protein sequence, read N- to C-terminus: General transcription factor IIH subunit 5 (71 aa).

Threonine 69 bears the Phosphothreonine mark.

The protein belongs to the TFB5 family. As to quaternary structure, component of the 7-subunit TFIIH core complex composed of XPB/ERCC3, XPD/ERCC2, GTF2H1, GTF2H2, GTF2H3, GTF2H4 and GTF2H5, which is active in NER. The core complex associates with the 3-subunit CDK-activating kinase (CAK) module composed of CCNH/cyclin H, CDK7 and MNAT1 to form the 10-subunit holoenzyme (holo-TFIIH) active in transcription. Part of TBP-based Pol II pre-initiation complex (PIC), in which Pol II core assembles with general transcription factors and other specific initiation factors including GTF2E1, GTF2E2, GTF2F1, GTF2F2, TCEA1, ERCC2, ERCC3, GTF2H2, GTF2H3, GTF2H4, GTF2H5, GTF2A1, GTF2A2, GTF2B and TBP; this large multi-subunit PIC complex mediates DNA unwinding and targets Pol II core to the transcription start site where the first phosphodiester bond forms.

It is found in the nucleus. It localises to the cytoplasm. In terms of biological role, component of the general transcription and DNA repair factor IIH (TFIIH) core complex, which is involved in general and transcription-coupled nucleotide excision repair (NER) of damaged DNA and, when complexed to CAK, in RNA transcription by RNA polymerase II. In NER, TFIIH acts by opening DNA around the lesion to allow the excision of the damaged oligonucleotide and its replacement by a new DNA fragment. In transcription, TFIIH has an essential role in transcription initiation. When the pre-initiation complex (PIC) has been established, TFIIH is required for promoter opening and promoter escape. Phosphorylation of the C-terminal tail (CTD) of the largest subunit of RNA polymerase II by the kinase module CAK controls the initiation of transcription. Necessary for the stability of the TFIIH complex and for the presence of normal levels of TFIIH in the cell. The chain is General transcription factor IIH subunit 5 from Homo sapiens (Human).